The chain runs to 391 residues: S-adenosylmethionine synthase (391 aa).

His19 is an ATP binding site. Position 21 (Asp21) interacts with Mg(2+). Residue Glu47 participates in K(+) binding. Positions 60 and 103 each coordinate L-methionine. The segment at 103–113 is flexible loop; sequence QSPDIAQGVDR. Residues 168–170, 236–237, Asp245, 251–252, Ala268, and Lys272 each bind ATP; these read DGK, RF, and RK. Residue Asp245 participates in L-methionine binding. Lys276 lines the L-methionine pocket.

Belongs to the AdoMet synthase family. In terms of assembly, homotetramer; dimer of dimers. Mg(2+) is required as a cofactor. Requires K(+) as cofactor.

Its subcellular location is the cytoplasm. The catalysed reaction is L-methionine + ATP + H2O = S-adenosyl-L-methionine + phosphate + diphosphate. It participates in amino-acid biosynthesis; S-adenosyl-L-methionine biosynthesis; S-adenosyl-L-methionine from L-methionine: step 1/1. In terms of biological role, catalyzes the formation of S-adenosylmethionine (AdoMet) from methionine and ATP. The overall synthetic reaction is composed of two sequential steps, AdoMet formation and the subsequent tripolyphosphate hydrolysis which occurs prior to release of AdoMet from the enzyme. This chain is S-adenosylmethionine synthase, found in Oleidesulfovibrio alaskensis (strain ATCC BAA-1058 / DSM 17464 / G20) (Desulfovibrio alaskensis).